Consider the following 1091-residue polypeptide: DNA mismatch repair protein Msh3 (1091 aa).

Low complexity-rich tracts occupy residues 1–15 (MPRGKSASGGSTAAG) and 24–40 (LSRFFRSAGSLRSSASS). Positions 1–84 (MPRGKSASGG…EENISVASHH (84 aa)) are disordered. Phosphoserine is present on S33. Residues 43–54 (PAEKVTEGDSRK) are compositionally biased toward basic and acidic residues. 850 to 857 (GPNMGGKS) is a binding site for ATP.

Belongs to the DNA mismatch repair MutS family. MSH3 subfamily. Component of the DNA mismatch repair (MMR) complex composed at least of MSH2, MSH3, MSH6, PMS1 and MLH1. Heterodimer consisting of MSH2-MSH3 (MutS beta). Forms a ternary complex with MutL alpha (MLH1-PMS1). Interacts with EXO1. Interacts with MCM9.

In terms of biological role, component of the post-replicative DNA mismatch repair system (MMR). Heterodimerizes with MSH2 to form MutS beta which binds to DNA mismatches thereby initiating DNA repair. When bound, the MutS beta heterodimer bends the DNA helix and shields approximately 20 base pairs. MutS beta recognizes large insertion-deletion loops (IDL) up to 13 nucleotides long. After mismatch binding, forms a ternary complex with the MutL alpha heterodimer, which is thought to be responsible for directing the downstream MMR events, including strand discrimination, excision, and resynthesis. The chain is DNA mismatch repair protein Msh3 (Msh3) from Mus musculus (Mouse).